The chain runs to 508 residues: Light-independent protochlorophyllide reductase subunit B (508 aa).

A [4Fe-4S] cluster-binding site is contributed by Asp-36. The active-site Proton donor is Asp-282. A substrate-binding site is contributed by 417–418; it reads GL.

This sequence belongs to the ChlB/BchB/BchZ family. In terms of assembly, protochlorophyllide reductase is composed of three subunits; BchL, BchN and BchB. Forms a heterotetramer of two BchB and two BchN subunits. It depends on [4Fe-4S] cluster as a cofactor.

It carries out the reaction chlorophyllide a + oxidized 2[4Fe-4S]-[ferredoxin] + 2 ADP + 2 phosphate = protochlorophyllide a + reduced 2[4Fe-4S]-[ferredoxin] + 2 ATP + 2 H2O. It participates in porphyrin-containing compound metabolism; bacteriochlorophyll biosynthesis (light-independent). Component of the dark-operative protochlorophyllide reductase (DPOR) that uses Mg-ATP and reduced ferredoxin to reduce ring D of protochlorophyllide (Pchlide) to form chlorophyllide a (Chlide). This reaction is light-independent. The NB-protein (BchN-BchB) is the catalytic component of the complex. The polypeptide is Light-independent protochlorophyllide reductase subunit B (Methylocella silvestris (strain DSM 15510 / CIP 108128 / LMG 27833 / NCIMB 13906 / BL2)).